The chain runs to 90 residues: Small ribosomal subunit protein uS17 (90 aa).

Belongs to the universal ribosomal protein uS17 family. In terms of assembly, part of the 30S ribosomal subunit.

Its function is as follows. One of the primary rRNA binding proteins, it binds specifically to the 5'-end of 16S ribosomal RNA. In Gluconobacter oxydans (strain 621H) (Gluconobacter suboxydans), this protein is Small ribosomal subunit protein uS17.